The sequence spans 121 residues: Small ribosomal subunit protein uS13 (121 aa).

The tract at residues 91–121 (HRRGLPVRGQNTKNNARTRKGPSKTVAGKKK) is disordered. Over residues 106-121 (ARTRKGPSKTVAGKKK) the composition is skewed to basic residues.

The protein belongs to the universal ribosomal protein uS13 family. Part of the 30S ribosomal subunit. Forms a loose heterodimer with protein S19. Forms two bridges to the 50S subunit in the 70S ribosome.

Its function is as follows. Located at the top of the head of the 30S subunit, it contacts several helices of the 16S rRNA. In the 70S ribosome it contacts the 23S rRNA (bridge B1a) and protein L5 of the 50S subunit (bridge B1b), connecting the 2 subunits; these bridges are implicated in subunit movement. Contacts the tRNAs in the A and P-sites. This chain is Small ribosomal subunit protein uS13, found in Listeria monocytogenes serotype 4b (strain CLIP80459).